Here is an 88-residue protein sequence, read N- to C-terminus: Pape peptide (88 aa).

Residues 1-22 (MNRKTLLVIFFVTLLIAEEVNS) form the signal peptide. Residues 23–45 (FRLGGFLKKIWRSKLVKRLRSKG) constitute a propeptide that is removed on maturation. A disordered region spans residues 49 to 88 (LKEALAPEPAPEPAPEPAPEAAPEAAPEPAAAAPERRRRR). The span at 56–68 (EPAPEPAPEPAPE) shows a compositional bias: pro residues. PAPE repeat units follow at residues 57 to 60 (PAPE), 61 to 64 (PAPE), and 65 to 68 (PAPE). A compositionally biased stretch (low complexity) spans 69–81 (AAPEAAPEPAAAA).

In terms of tissue distribution, expressed by the venom gland.

It is found in the secreted. The protein is Pape peptide of Tityus serrulatus (Brazilian scorpion).